The sequence spans 87 residues: uncharacterized protein (87 aa).

The protein to H.pylori HP0495/JHP0447.

This is an uncharacterized protein from Campylobacter jejuni subsp. jejuni serotype O:2 (strain ATCC 700819 / NCTC 11168).